The following is a 444-amino-acid chain: UDP-N-acetylglucosamine 1-carboxyvinyltransferase (444 aa).

Phosphoenolpyruvate is bound at residue 22-23 (KN). A UDP-N-acetyl-alpha-D-glucosamine-binding site is contributed by R94. The active-site Proton donor is the D119. Positions 309 and 331 each coordinate UDP-N-acetyl-alpha-D-glucosamine.

Belongs to the EPSP synthase family. MurA subfamily.

The protein localises to the cytoplasm. The catalysed reaction is phosphoenolpyruvate + UDP-N-acetyl-alpha-D-glucosamine = UDP-N-acetyl-3-O-(1-carboxyvinyl)-alpha-D-glucosamine + phosphate. It participates in cell wall biogenesis; peptidoglycan biosynthesis. Its function is as follows. Cell wall formation. Adds enolpyruvyl to UDP-N-acetylglucosamine. In Chlamydia abortus (strain DSM 27085 / S26/3) (Chlamydophila abortus), this protein is UDP-N-acetylglucosamine 1-carboxyvinyltransferase.